We begin with the raw amino-acid sequence, 379 residues long: Bifunctional enzyme IspD/IspF (379 aa).

Positions 1–213 (MSQVSLVVMG…QGFEPPFGGC (213 aa)) are 2-C-methyl-D-erythritol 4-phosphate cytidylyltransferase. The interval 214–379 (YGGSGFDVHA…DWTKHACFNR (166 aa)) is 2-C-methyl-D-erythritol 2,4-cyclodiphosphate synthase. A divalent metal cation contacts are provided by Asp-220 and His-222. 4-CDP-2-C-methyl-D-erythritol 2-phosphate-binding positions include 220–222 (DVH) and 246–247 (HS). His-254 serves as a coordination point for a divalent metal cation. Residues 268–270 (DIG), 273–277 (FPDSD), 344–347 (TTTE), Phe-351, and Arg-354 each bind 4-CDP-2-C-methyl-D-erythritol 2-phosphate.

In the N-terminal section; belongs to the IspD/TarI cytidylyltransferase family. IspD subfamily. It in the C-terminal section; belongs to the IspF family. Requires a divalent metal cation as cofactor.

It catalyses the reaction 2-C-methyl-D-erythritol 4-phosphate + CTP + H(+) = 4-CDP-2-C-methyl-D-erythritol + diphosphate. It carries out the reaction 4-CDP-2-C-methyl-D-erythritol 2-phosphate = 2-C-methyl-D-erythritol 2,4-cyclic diphosphate + CMP. It participates in isoprenoid biosynthesis; isopentenyl diphosphate biosynthesis via DXP pathway; isopentenyl diphosphate from 1-deoxy-D-xylulose 5-phosphate: step 2/6. The protein operates within isoprenoid biosynthesis; isopentenyl diphosphate biosynthesis via DXP pathway; isopentenyl diphosphate from 1-deoxy-D-xylulose 5-phosphate: step 4/6. In terms of biological role, bifunctional enzyme that catalyzes the formation of 4-diphosphocytidyl-2-C-methyl-D-erythritol from CTP and 2-C-methyl-D-erythritol 4-phosphate (MEP) (IspD), and catalyzes the conversion of 4-diphosphocytidyl-2-C-methyl-D-erythritol 2-phosphate (CDP-ME2P) to 2-C-methyl-D-erythritol 2,4-cyclodiphosphate (ME-CPP) with a corresponding release of cytidine 5-monophosphate (CMP) (IspF). This Wolinella succinogenes (strain ATCC 29543 / DSM 1740 / CCUG 13145 / JCM 31913 / LMG 7466 / NCTC 11488 / FDC 602W) (Vibrio succinogenes) protein is Bifunctional enzyme IspD/IspF.